We begin with the raw amino-acid sequence, 525 residues long: MAAAPPLRDRLSFLHRLPILLKGTSDDDVPCPGYLFEEIAKISHESPGSSQCLLEYLLSRLHSSSGHGKLKVLKILLYLCSHGSSFFLLILKRNSAFIQEAAAFAGPPDPLHGNSLYQKVRAAAQDLGSTLFSDTVLPLAPSQPLGTPPATGMGSQARPHSTLQGFGYSKEHGRTAVRHQPGQAGGGWDELDSGPSSQNSSQNSDLSRVSDSGSHSGSDSHSGASREPGDLAERVEVVALSDCQQELSLVRTVTRGPRAFLSREEAQHFIKACGLLNCEAVLQLLTCHLRGTSECTQLRALCAIASLGSSDLLPQEHILLRTRPWLQELSMGSPGPVTNKATKILRHFEASCGQLSPARGTSAEPGPTAALPGPSDLLTDAVPLPGSQVFLQPLSSTPVSSRSPAPSSGMPSSPVPTPPPDASPIPAPGDPSEAEARLAESRRWRPERIPGGTDSPKRGPSSCAWSRDSLFAGMELVACPRLVGAGAAAGESCPDAPRAPQTSSQRTAAKEPPGSEPSAFAFLNA.

An ENTH domain is found at R8–P141. The interval L139–G229 is disordered. The segment covering S193–S225 has biased composition (low complexity). Phosphoserine is present on residues S333 and S356. A disordered region spans residues L355 to W465. Low complexity predominate over residues P393–S412. A compositionally biased stretch (pro residues) spans S413–G429. The span at A434 to R448 shows a compositional bias: basic and acidic residues. Residues R467–V477 form an interaction with AP4B1 region. The interval A487–A525 is disordered. Residues S515 to A525 form an interaction with AP4E1 region.

In terms of assembly, interacts with AP4B1 and AP4E1; the interaction is direct and mediates the association of TEPSIN with the adapter-like complex 4 (AP-4), a heterotetramer composed of AP4B1, AP4E1, AP4M1 and AP4S1.

Its subcellular location is the golgi apparatus. It localises to the trans-Golgi network membrane. The protein resides in the cytoplasmic vesicle. The protein localises to the cytoplasm. It is found in the cytosol. Its function is as follows. Associates with the adapter-like complex 4 (AP-4) and may therefore play a role in vesicular trafficking of proteins at the trans-Golgi network. The polypeptide is AP-4 complex accessory subunit Tepsin (Homo sapiens (Human)).